The primary structure comprises 139 residues: MKFQLLTLVSIATTTLAINLEQVRLINDDELMVQDAQFDYPAIVNLKDQDAEIAKKTITSSSSTTTTTTAKKDKKTTSTTSASSTTTTSTKSNSTSPSSSSSKKHKSETASITKTGGADSVAAAAAVGGPILAALALLL.

Positions 1-17 are cleaved as a signal peptide; it reads MKFQLLTLVSIATTTLA. Low complexity-rich tracts occupy residues 57-69 and 77-101; these read TITSSSSTTTTTT and TSTTSASSTTTTSTKSNSTSPSSSS. The interval 57-115 is disordered; it reads TITSSSSTTTTTTAKKDKKTTSTTSASSTTTTSTKSNSTSPSSSSSKKHKSETASITKT. N-linked (GlcNAc...) asparagine glycosylation occurs at N93. G116 carries GPI-anchor amidated glycine lipidation. Positions 117–139 are cleaved as a propeptide — removed in mature form; the sequence is GADSVAAAAAVGGPILAALALLL.

The protein localises to the cell membrane. The chain is GPI-anchored protein 53 (PGA53) from Candida albicans (strain SC5314 / ATCC MYA-2876) (Yeast).